A 341-amino-acid chain; its full sequence is HTH-type transcriptional repressor PurR (341 aa).

Residues 2–56 (ATIKDVAKHAGVSTTTVSHVINKTRFVAENTKAAVWAAIKELHYSPSAVARSLKV) enclose the HTH lacI-type domain. Positions 4 to 23 (IKDVAKHAGVSTTTVSHVIN) form a DNA-binding region, H-T-H motif. Residues 48-56 (SAVARSLKV) mediate DNA binding. Positions 73, 190, 192, and 275 each coordinate hypoxanthine.

As to quaternary structure, homodimer.

It functions in the pathway purine metabolism; purine nucleotide biosynthesis [regulation]. Functionally, is the main repressor of the genes involved in the de novo synthesis of purine nucleotides, regulating purB, purC, purEK, purF, purHD, purL, purMN and guaBA expression. PurR is allosterically activated to bind its cognate DNA by binding the purine corepressors, hypoxanthine or guanine, thereby effecting transcription repression. The polypeptide is HTH-type transcriptional repressor PurR (Yersinia pestis bv. Antiqua (strain Antiqua)).